The following is a 979-amino-acid chain: Putative transcription initiation factor TFIID 111 kDa subunit (979 aa).

Serine 244 carries the post-translational modification Phosphoserine.

TFIID is composed of TATA binding protein (TBP) and a number of TBP-associated factors (TAFs).

It is found in the nucleus. Functionally, TAFs are components of the transcription factor IID (TFIID) complex that are essential for mediating regulation of RNA polymerase transcription. The polypeptide is Putative transcription initiation factor TFIID 111 kDa subunit (Schizosaccharomyces pombe (strain 972 / ATCC 24843) (Fission yeast)).